A 91-amino-acid chain; its full sequence is Cell division protein FtsB (91 aa).

Residues 1–3 (MRW) lie on the Cytoplasmic side of the membrane. A helical transmembrane segment spans residues 4 to 21 (PLIVLAVLVIVLQYPLWL). Over 22 to 91 (GKGGWLRVWD…EIFVHTPRKP (70 aa)) the chain is Periplasmic. Residues 28–74 (RVWDVDRQLQAQRETNQRLEQRNAGLEAEVRDLKSGNEAVEERARFE) are a coiled coil.

This sequence belongs to the FtsB family. Part of a complex composed of FtsB, FtsL and FtsQ.

It localises to the cell inner membrane. Its function is as follows. Essential cell division protein. May link together the upstream cell division proteins, which are predominantly cytoplasmic, with the downstream cell division proteins, which are predominantly periplasmic. This chain is Cell division protein FtsB, found in Aromatoleum aromaticum (strain DSM 19018 / LMG 30748 / EbN1) (Azoarcus sp. (strain EbN1)).